A 349-amino-acid chain; its full sequence is Phosphate acyltransferase (349 aa).

Belongs to the PlsX family. Homodimer. Probably interacts with PlsY.

The protein localises to the cytoplasm. It catalyses the reaction a fatty acyl-[ACP] + phosphate = an acyl phosphate + holo-[ACP]. Its pathway is lipid metabolism; phospholipid metabolism. Functionally, catalyzes the reversible formation of acyl-phosphate (acyl-PO(4)) from acyl-[acyl-carrier-protein] (acyl-ACP). This enzyme utilizes acyl-ACP as fatty acyl donor, but not acyl-CoA. The polypeptide is Phosphate acyltransferase (Rhodospirillum rubrum (strain ATCC 11170 / ATH 1.1.1 / DSM 467 / LMG 4362 / NCIMB 8255 / S1)).